Reading from the N-terminus, the 135-residue chain is Sex-regulated protein janus-A (135 aa).

Lys-37 contributes to the substrate binding site. The active-site Proton acceptor is His-63. 104-106 lines the substrate pocket; the sequence is SQG.

It belongs to the janus family.

Its function is as follows. JanA and janB regulate somatic sex differentiation. The sequence is that of Sex-regulated protein janus-A (janA) from Drosophila mauritiana (Fruit fly).